We begin with the raw amino-acid sequence, 491 residues long: Dipeptide and tripeptide permease B (491 aa).

Residues 1–26 (MNNTAPGLLHQPKPFFMIFFVELWER) are Cytoplasmic-facing. A helical transmembrane segment spans residues 27-47 (FGYYGVQGILAVFFVKQLGFS). Topologically, residues 48 to 51 (QEQA) are periplasmic. Residues 52-72 (FITFGAFAALVYGLISIGGYV) form a helical membrane-spanning segment. Topologically, residues 73–81 (GDHLLGTKR) are cytoplasmic. Residues 82 to 102 (TMVLGAIVLALGYFMTGMSLL) form a helical membrane-spanning segment. Residues 103–105 (KPE) are Periplasmic-facing. A helical membrane pass occupies residues 106-126 (MIFIALGTIAVGNGLFKANPA). At 127 to 145 (SLLSKCYPPKDPRLDGAFT) the chain is on the cytoplasmic side. Residues 146–166 (LFYMSINIGSLLSLSLAPIIA) traverse the membrane as a helical segment. Residues 167–171 (ERFGY) lie on the Periplasmic side of the membrane. Residues 172-192 (AVTYNLCGLGLIIALLVYFAC) form a helical membrane-spanning segment. Residues 193 to 210 (RGMVRSIGSAPDHQPLNY) are Cytoplasmic-facing. Residues 211-231 (GKLLLVLAGAVVMIFLCAWLM) form a helical membrane-spanning segment. Residue His232 is a topological domain, periplasmic. Residues 233 to 253 (NVGVANIVLIAVSAVVLYFFF) form a helical membrane-spanning segment. Residues 254 to 266 (REAFKQDKTGRNR) are Cytoplasmic-facing. A helical membrane pass occupies residues 267-287 (MFVAFILMIEAVLFYILYAQM). The Periplasmic portion of the chain corresponds to 288–312 (PTSLNFFAINNVRHELLGFAINPVS). The chain crosses the membrane as a helical span at residues 313-335 (FQALNPFWVVVASPILASIYTRL). The Cytoplasmic segment spans residues 336–349 (GSRGRDMTMPTKFT). A helical membrane pass occupies residues 350-370 (LGMLLCSLGFLTAAAAGMWFA). Over 371 to 378 (DAQGLTSP) the chain is Periplasmic. A helical membrane pass occupies residues 379–399 (WFVVLVYLFQSLGELMISALG). Topologically, residues 400-423 (LAMVAALVPQYLMGFILGMWFLTQ) are cytoplasmic. The chain crosses the membrane as a helical span at residues 424–444 (AAAFLLGGYVATFTAVPAGIH). The Periplasmic portion of the chain corresponds to 445–454 (DPLQTLPIYT). The chain crosses the membrane as a helical span at residues 455 to 475 (GVFGKIGIATLIVTLVMAAMV). At 476–491 (PWLNRMMNTPADGQKA) the chain is on the cytoplasmic side.

It belongs to the major facilitator superfamily. Proton-dependent oligopeptide transporter (POT/PTR) (TC 2.A.17) family. DtpB subfamily.

The protein localises to the cell inner membrane. Its function is as follows. Proton-dependent permease that transports di- and tripeptides. The protein is Dipeptide and tripeptide permease B of Edwardsiella piscicida.